A 1220-amino-acid chain; its full sequence is Cullin-associated NEDD8-dissociated protein 1 (1220 aa).

HEAT repeat units follow at residues 1–35 (MEEGILLKKYVESSDKDIRYMALSDLAARLNDANH), 42–79 (ESFPDTLDVLLQALSDASPEVQQEAVRCVAIISSKIPQ), 121–157 (FYTSTVFPSFLQILKQYNVAQEEFFAILCVVCDSLEI), 259–295 (ADYTNKILSLLKKEEAPDELTQKLLEVLGLLLEYQQV), 365–410 (LSRL…HVPR), 615–650 (IFLRRVLIILCKKLQEEPTRSAAARALCDIFMSVTD), 680–700 (TTAYLELLEVLLKVGQKYLAE), 701–737 (SLLEHILGLLIETLKRNTENTVAILKCLLIIPLSILL), 738–775 (KSKNLLIDTIISHLQSSTIHLNEESVCLLSRIIAVISK), 810–847 (FQSKAIVTSLNKSFMSPKSEVRIKVFTTLIFGQLDYGK), 850–887 (LPANEYFDTIASNLNSPNADVMKAAAIALGSLTSQSEK), and 1020–1057 (EVSQETLQVIISVIKNRRSCIADVYNELLQGLISKSSV).

It belongs to the CAND family.

It is found in the nucleus. Functionally, key assembly factor of SCF (SKP1-CUL1-F-box protein) E3 ubiquitin ligase complexes that promotes the exchange of the substrate-recognition F-box subunit in SCF complexes, thereby playing a key role in the cellular repertoire of SCF complexes. Acts as a F-box protein exchange factor. In Schizosaccharomyces pombe (strain 972 / ATCC 24843) (Fission yeast), this protein is Cullin-associated NEDD8-dissociated protein 1 (knd1).